The chain runs to 629 residues: Tudor and KH domain-containing protein homolog (629 aa).

A helical transmembrane segment spans residues 9–29 (LPIALGLSLVTVTAFVAYYVL). KH domains follow at residues 46–109 (INTI…ETLI) and 119–185 (IMSE…KKLV). The tract at residues 198-240 (IEQSKRPPRHSSSPPSPCPSPGDRDADADAQGDVDHTRVKYKR) is disordered. Basic and acidic residues predominate over residues 219 to 240 (GDRDADADAQGDVDHTRVKYKR). The region spanning 297-362 (HVSVGQVVAA…CELRADLLRL (66 aa)) is the Tudor domain. The disordered stretch occupies residues 464 to 526 (PAPSPRPSPP…GDDSKDKDGI (63 aa)).

This sequence belongs to the Tdrkh family. As to quaternary structure, interacts with (symmetrically methylated) Siwi. Interacts with (symmetrically methylated) Ago3. Interacts with PNLDC1/trimmer; interaction takes place on the mitochondrial surface and recruits PNLDC1/trimmer to Siwi-bound pre-piRNAs.

Its subcellular location is the mitochondrion outer membrane. Functionally, participates in the primary piRNA biogenesis pathway and is required during spermatogenesis to repress transposable elements and prevent their mobilization, which is essential for the germline integrity. The piRNA metabolic process mediates the repression of transposable elements during meiosis by forming complexes composed of piRNAs and Piwi proteins (Siwi or Ago3) and govern the methylation and subsequent repression of transposons. Required for the final steps of primary piRNA biogenesis by participating in the processing of 31-37 nt intermediates into mature piRNAs: acts by recruiting the exonuclease PNLDC1/trimmer to Siwi-bound pre-piRNAs. In Bombyx mori (Silk moth), this protein is Tudor and KH domain-containing protein homolog.